The following is a 311-amino-acid chain: MPGSEPYGRLQYREINGKRMAYIDEARGDAIVFQHGNPSSSYLWRNVLPHTEGLGRLVACDLIGMGASDKLDGSGPDSYHYHENRDYLFALWDALDLGDRVTLVLHDWGGALGFDWANRHRDRVAGIVHMETVSVPMEWDDFPDEVAQMFRGLRSPQGEEMVLENNAFIEGVLPSIVMRTLSEEEMIHYRRPFLNAGEDRRPTLSWPRDVPLAGEPAEVVAVIEDFGEWLATSDIPKLFIRADPGVIQGKQRILDIVRSWPNQTEITVPGTHFLQEDSADQIGEAIASFVREIRAGDNLHREAAPEMNSAS.

Residues 30–148 form the AB hydrolase-1 domain; the sequence is AIVFQHGNPS…WDDFPDEVAQ (119 aa). Aspartate 107 acts as the Nucleophile in catalysis. Residue glutamate 131 is the Proton donor of the active site. The Proton acceptor role is filled by histidine 272.

This sequence belongs to the haloalkane dehalogenase family. Type 2 subfamily. In terms of assembly, monomer.

The enzyme catalyses 1-haloalkane + H2O = a halide anion + a primary alcohol + H(+). Its function is as follows. Catalyzes hydrolytic cleavage of carbon-halogen bonds in halogenated aliphatic compounds, leading to the formation of the corresponding primary alcohols, halide ions and protons. This Mycolicibacterium smegmatis (strain ATCC 700084 / mc(2)155) (Mycobacterium smegmatis) protein is Haloalkane dehalogenase.